The following is a 185-amino-acid chain: MKLKKDKRREAIRQQIDSNPFITDHELSDLFQVSIQTIRLDRTYLNIPELRKRIKLVAEKNYDQISSIEEQEFIGDLIQVNPNVKAQSILDITSDSVFHKTGIARGHVLFAQANSLCVALIKQPTVLTHESSIQFIEKVKLNDTVRAEARVVNQTAKHYYVEVKSYVKHTLVFKGNFKMFYDKRG.

The protein belongs to the FapR family.

Transcriptional factor involved in regulation of membrane lipid biosynthesis by repressing genes involved in fatty acid and phospholipid metabolism. The sequence is that of Transcription factor FapR from Staphylococcus aureus (strain Mu3 / ATCC 700698).